The following is a 195-amino-acid chain: uncharacterized protein (195 aa).

4 helical membrane-spanning segments follow: residues 89-106, 111-128, 149-168, and 172-194; these read SWISVLLIVTIIALPLLP, HLPLAVYLMVLAGYVWKR, VKISRVGAVYLLFLAVVLLL, and LNALVVLLLIAVSCAAFFLFLNI.

The protein resides in the cell membrane. This is an uncharacterized protein from Bacillus subtilis (strain 168).